A 145-amino-acid polypeptide reads, in one-letter code: uncharacterized protein (145 aa).

The protein belongs to the asfivirus K145R family.

Its subcellular location is the virion. This is an uncharacterized protein from Ornithodoros (relapsing fever ticks).